The primary structure comprises 221 residues: Large ribosomal subunit protein uL3 (221 aa).

The protein belongs to the universal ribosomal protein uL3 family. In terms of assembly, part of the 50S ribosomal subunit. Forms a cluster with proteins L14 and L19.

Functionally, one of the primary rRNA binding proteins, it binds directly near the 3'-end of the 23S rRNA, where it nucleates assembly of the 50S subunit. This is Large ribosomal subunit protein uL3 from Chlamydia felis (strain Fe/C-56) (Chlamydophila felis).